A 462-amino-acid polypeptide reads, in one-letter code: Cleavage and polyadenylation specificity factor subunit 7 (462 aa).

2 disordered regions span residues 34–68 (VLTA…NKTP) and 161–213 (TRQN…PSVL). The span at 50–62 (EPPPPVRQEPAPK) shows a compositional bias: pro residues. Residues 82–162 (AAVYVGSFSW…EKVDVRPATR (81 aa)) enclose the RRM domain. Basic and acidic residues predominate over residues 181–190 (HSRDSSDSAD). T194 bears the Phosphothreonine mark. S196 bears the Phosphoserine mark. K345 is covalently cross-linked (Glycyl lysine isopeptide (Lys-Gly) (interchain with G-Cter in SUMO2)). The disordered stretch occupies residues 400–462 (SVGASGSSSR…HRDRERDRHH (63 aa)). S404 and S414 each carry phosphoserine. Positions 409-460 (RKRHRSRERSPSRSRESSRRHRDLLHNEDRHDDYFQERNREHERHRDRERDR) are arg/Ser-rich domain. Basic and acidic residues-rich tracts occupy residues 416–425 (ERSPSRSRES) and 432–462 (LLHN…DRHH).

The protein belongs to the RRM CPSF6/7 family. Component of the cleavage factor Im (CFIm) complex which is a heterotetramer composed of two subunits of NUDT21/CPSF5 and two subunits of CPSF6 or CPSF7 or a heterodimer of CPSF6 and CPSF7. The cleavage factor Im (CFIm) complex associates with the CPSF and CSTF complexes to promote the assembly of the core mRNA 3'-processing machinery. Interacts with NUDT21/CPSF5. Interacts (via Arg/Ser-rich domain) with FIP1L1 (preferentially via unphosphorylated form and Arg/Glu/Asp-rich region); this interaction mediates, at least in part, the interaction between the CFIm and CPSF complexes and may be inhibited by CPSF7 hyper-phosphorylation. In terms of processing, phosphorylated. Asymmetrically dimethylated on arginine residues by PRMT1.

It is found in the nucleus. The protein localises to the cytoplasm. Functionally, component of the cleavage factor Im (CFIm) complex that functions as an activator of the pre-mRNA 3'-end cleavage and polyadenylation processing required for the maturation of pre-mRNA into functional mRNAs. CFIm contributes to the recruitment of multiprotein complexes on specific sequences on the pre-mRNA 3'-end, so called cleavage and polyadenylation signals (pA signals). Most pre-mRNAs contain multiple pA signals, resulting in alternative cleavage and polyadenylation (APA) producing mRNAs with variable 3'-end formation. The CFIm complex acts as a key regulator of cleavage and polyadenylation site choice during APA through its binding to 5'-UGUA-3' elements localized in the 3'-untranslated region (UTR) for a huge number of pre-mRNAs. CPSF7 activates directly the mRNA 3'-processing machinery. Binds to pA signals in RNA substrates. This Rattus norvegicus (Rat) protein is Cleavage and polyadenylation specificity factor subunit 7.